A 292-amino-acid polypeptide reads, in one-letter code: GTP cyclohydrolase FolE2 (292 aa).

The protein belongs to the GTP cyclohydrolase IV family.

It catalyses the reaction GTP + H2O = 7,8-dihydroneopterin 3'-triphosphate + formate + H(+). Its pathway is cofactor biosynthesis; 7,8-dihydroneopterin triphosphate biosynthesis; 7,8-dihydroneopterin triphosphate from GTP: step 1/1. Its function is as follows. Converts GTP to 7,8-dihydroneopterin triphosphate. This is GTP cyclohydrolase FolE2 from Staphylococcus haemolyticus (strain JCSC1435).